The following is a 946-amino-acid chain: Calcium-transporting ATPase type 2C member 2 (946 aa).

At 1 to 106 (MVEGRVSEFL…DNSEPVWKKY (106 aa)) the chain is on the cytoplasmic side. Residues 71 to 95 (VDLHTGLSEFSVTQRRLAHGWNEFV) form an interaction with ORAI1 region. The chain crosses the membrane as a helical span at residues 107 to 127 (LDQFKNPLILLLLGSALVSVL). Residues 128–129 (TK) are Extracellular-facing. A helical membrane pass occupies residues 130–150 (EYEDAVSIATAVLVVVTVAFI). At 151–231 (QEYRSEKSLE…EAEPCSKTDS (81 aa)) the chain is on the cytoplasmic side. A helical transmembrane segment spans residues 232 to 252 (PLTGGGDLTTLSNIVFMGTLV). The Extracellular segment spans residues 253–293 (QYGRGQGVVIGTGESSQFGEVFKMMQAEETPKTPLQKSMDR). The residue at position 264 (threonine 264) is a Phosphothreonine. 2 positions are modified to phosphoserine: serine 267 and serine 268. Residues 294–314 (LGKQLTLFSFGIIGLIMLIGW) traverse the membrane as a helical segment. Over 315 to 331 (SQGKQLLSMFTIGVSLA) the chain is Cytoplasmic. Ca(2+)-binding residues include valine 332, alanine 333, isoleucine 335, and glutamate 337. The helical transmembrane segment at 332-352 (VAAIPEGLPIVVMVTLVLGVL) threads the bilayer. The Extracellular segment spans residues 353 to 750 (RMAKKRVIVK…ISALSLITLS (398 aa)). Aspartate 379 (4-aspartylphosphate intermediate) is an active-site residue. Aspartate 674 and aspartate 678 together coordinate Mg(2+). Residues 751–771 (TVFNLPSPLNAMQILWINIIM) traverse the membrane as a helical segment. Residues asparagine 768 and aspartate 772 each contribute to the Ca(2+) site. At 772–804 (DGPPAQSLGVEPVDKDAFRQPPRSVRDTILSRA) the chain is on the cytoplasmic side. A helical membrane pass occupies residues 805 to 825 (LILKILMSAAIIISGTLFIFW). At 826–837 (KEMPEDRASTPR) the chain is on the extracellular side. Residues 838–855 (TTTMTFTCFVFFDLFNAL) form a helical membrane-spanning segment. Residues 856 to 874 (TCRSQTKLIFEIGFLRNHM) lie on the Cytoplasmic side of the membrane. A helical membrane pass occupies residues 875-895 (FLYSVLGSILGQLAVIYIPPL). Residues 896 to 905 (QRVFQTENLG) lie on the Extracellular side of the membrane. The helical transmembrane segment at 906–926 (ALDLLFLTGLASSVFILSELL) threads the bilayer. Topologically, residues 927 to 946 (KLCEKYCCSPKRVQMHPEDV) are cytoplasmic.

This sequence belongs to the cation transport ATPase (P-type) (TC 3.A.3) family. Type IIA subfamily. Interacts (via N-terminus) with ORAI1 (via N- and C-termini); this interaction regulates Ca(2+) influx at the plasma membrane. Highly expressed in the gastrointestinal and respiratory tracts, prostate, thyroid, salivary, and mammary glands. Expressed in colon epithelial cells (at protein level). Expressed in brain and testis (at protein level).

Its subcellular location is the golgi apparatus. The protein resides in the trans-Golgi network membrane. It localises to the cell membrane. It is found in the basolateral cell membrane. It carries out the reaction Ca(2+)(in) + ATP + H2O = Ca(2+)(out) + ADP + phosphate + H(+). The enzyme catalyses Mn(2+)(in) + ATP + H2O = Mn(2+)(out) + ADP + phosphate + H(+). Functionally, ATP-driven pump that supplies the Golgi apparatus with Ca(2+) and Mn(2+) ions, both essential cofactors for processing and trafficking of newly synthesized proteins in the secretory pathway. Within a catalytic cycle, acquires Ca(2+) or Mn(2+) ions on the cytoplasmic side of the membrane and delivers them to the lumenal side. The transfer of ions across the membrane is coupled to ATP hydrolysis and is associated with a transient phosphorylation that shifts the pump conformation from inward-facing to outward-facing state. Induces Ca(2+) influx independently of its ATP-driven pump function. At the basolateral membrane of mammary epithelial cells, interacts with Ca(2+) channel ORAI1 and mediates Ca(2+) entry independently of the Ca(2+) content of endoplasmic reticulum or Golgi stores. May facilitate transepithelial transport of large quantities of Ca(2+) for milk secretion via activation of Ca(2+) influx channels at the plasma membrane and active Ca(2+) transport at the Golgi apparatus. The polypeptide is Calcium-transporting ATPase type 2C member 2 (Homo sapiens (Human)).